The primary structure comprises 185 residues: Ribosome-recycling factor (185 aa).

It belongs to the RRF family.

The protein resides in the cytoplasm. In terms of biological role, responsible for the release of ribosomes from messenger RNA at the termination of protein biosynthesis. May increase the efficiency of translation by recycling ribosomes from one round of translation to another. The sequence is that of Ribosome-recycling factor from Photobacterium profundum (strain SS9).